A 131-amino-acid chain; its full sequence is Arsenate reductase (131 aa).

Active-site nucleophile residues include cysteine 10, cysteine 82, and cysteine 89. Disulfide bonds link cysteine 10-cysteine 82 and cysteine 82-cysteine 89.

It belongs to the low molecular weight phosphotyrosine protein phosphatase family. Thioredoxin-coupled ArsC subfamily.

It localises to the cytoplasm. The catalysed reaction is arsenate + [thioredoxin]-dithiol + H(+) = arsenite + [thioredoxin]-disulfide + H2O. Catalyzes the reduction of arsenate [As(V)] to arsenite [As(III)]. This is Arsenate reductase from Staphylococcus xylosus.